Consider the following 390-residue polypeptide: Succinate--CoA ligase [ADP-forming] subunit beta (390 aa).

The ATP-grasp domain occupies 9-245 (KHLLKKYNIP…TTQEDEHETM (237 aa)). Residues K46, 53–55 (GRG), E99, S102, and E107 contribute to the ATP site. Mg(2+) contacts are provided by N200 and D214. Substrate is bound by residues N265 and 322 to 324 (GIV).

Belongs to the succinate/malate CoA ligase beta subunit family. In terms of assembly, heterotetramer of two alpha and two beta subunits. Mg(2+) serves as cofactor.

The enzyme catalyses succinate + ATP + CoA = succinyl-CoA + ADP + phosphate. It carries out the reaction GTP + succinate + CoA = succinyl-CoA + GDP + phosphate. Its pathway is carbohydrate metabolism; tricarboxylic acid cycle; succinate from succinyl-CoA (ligase route): step 1/1. In terms of biological role, succinyl-CoA synthetase functions in the citric acid cycle (TCA), coupling the hydrolysis of succinyl-CoA to the synthesis of either ATP or GTP and thus represents the only step of substrate-level phosphorylation in the TCA. The beta subunit provides nucleotide specificity of the enzyme and binds the substrate succinate, while the binding sites for coenzyme A and phosphate are found in the alpha subunit. The chain is Succinate--CoA ligase [ADP-forming] subunit beta from Coxiella burnetii (strain RSA 331 / Henzerling II).